Reading from the N-terminus, the 349-residue chain is tRNA pseudouridine synthase D (349 aa).

Substrate is bound at residue F27. D80 (nucleophile) is an active-site residue. A substrate-binding site is contributed by N129. Residues 155–303 (GVPNYFGAQR…VEASRRAMLL (149 aa)) enclose the TRUD domain. F329 contacts substrate.

This sequence belongs to the pseudouridine synthase TruD family.

The enzyme catalyses uridine(13) in tRNA = pseudouridine(13) in tRNA. Functionally, responsible for synthesis of pseudouridine from uracil-13 in transfer RNAs. The protein is tRNA pseudouridine synthase D of Salmonella typhi.